The following is a 475-amino-acid chain: Maintenance of mitochondrial morphology protein 1 (475 aa).

The Lumenal portion of the chain corresponds to 1–14; that stretch reads MSETFSPNLTFTEG. Residues 15 to 35 form a helical membrane-spanning segment; that stretch reads FVLGQASFLIILLLFIRYVVF. Residues 36–475 are Cytoplasmic-facing; the sequence is SPSEQIDHEG…VTPGQVGTSR (440 aa). In terms of domain architecture, SMP-LTD spans 80-278; sequence PAESSDWVNV…HPNHISLALP (199 aa). Disordered stretches follow at residues 321–381 and 394–475; these read NPVE…GQPQ and SYPH…GTSR. A compositionally biased stretch (pro residues) spans 341 to 351; it reads PPTPLVQPPGT. Polar residues-rich tracts occupy residues 353–380 and 394–403; these read PTLSVSSRQSHRQSLPPSRPQSTTQGQP and SYPHYNTYTL. Low complexity predominate over residues 442–464; sequence STTSSLTPSQSQSQFRFRGQFAS.

Belongs to the MMM1 family. In terms of assembly, homodimer. Component of the ER-mitochondria encounter structure (ERMES) or MDM complex, composed of MMM1, MDM10, MDM12 and MDM34. An MMM1 homodimer associates with one molecule of MDM12 on each side in a pairwise head-to-tail manner, and the SMP-LTD domains of MMM1 and MDM12 generate a continuous hydrophobic tunnel for phospholipid trafficking.

It is found in the endoplasmic reticulum membrane. Component of the ERMES/MDM complex, which serves as a molecular tether to connect the endoplasmic reticulum (ER) and mitochondria. Components of this complex are involved in the control of mitochondrial shape and protein biogenesis, and function in nonvesicular lipid trafficking between the ER and mitochondria. The MDM12-MMM1 subcomplex functions in the major beta-barrel assembly pathway that is responsible for biogenesis of all outer membrane beta-barrel proteins, and acts in a late step after the SAM complex. The MDM10-MDM12-MMM1 subcomplex further acts in the TOM40-specific pathway after the action of the MDM12-MMM1 complex. Essential for establishing and maintaining the structure of mitochondria and maintenance of mtDNA nucleoids. This Cryptococcus neoformans var. neoformans serotype D (strain B-3501A) (Filobasidiella neoformans) protein is Maintenance of mitochondrial morphology protein 1.